The chain runs to 393 residues: Lysophosphatidic acid receptor 1 (393 aa).

At 1 to 50 (MAAASTSSPVVSQPQFTAMNEPQCFYNESIAFFYNRSGKYLATEWNTVSK) the chain is on the extracellular side. 2 disulfides stabilise this stretch: Cys-24/Cys-190 and Cys-188/Cys-195. N-linked (GlcNAc...) asparagine glycosylation is found at Asn-27 and Asn-35. Residue Lys-39 participates in a 1-acyl-sn-glycero-3-phosphate binding. Residues 51-75 (LVMGLGITVCIFIMLANLLVMVAIY) form a helical membrane-spanning segment. Over 76–83 (VNRRFHFP) the chain is Cytoplasmic. The helical transmembrane segment at 84 to 107 (IYYLMANLAAADFFAGLAYFYLMF) threads the bilayer. Residues 108 to 121 (NTGPNTRRLTVSTW) lie on the Extracellular side of the membrane. Residues 122-144 (LLRQGLIDTTVTASVANLLAIAI) traverse the membrane as a helical segment. 124–129 (RQGLID) contributes to the a 1-acyl-sn-glycero-3-phosphate binding site. Residues 145-163 (ERHITVFRMQLHTRMSNRR) are Cytoplasmic-facing. Residues 164 to 184 (VVVVIVVIWTMAIVMGAIPSV) form a helical membrane-spanning segment. Residues 185-204 (GWNCICDIENCSNMAPLYSD) are Extracellular-facing. The helical transmembrane segment at 205–225 (SYLVFWAIFNLVTFVVMVVLY) threads the bilayer. Residue Trp-210 participates in a 1-acyl-sn-glycero-3-phosphate binding. At 226–255 (AHIFGYVRQRTMRMSRHSSGPRRNRDTMMS) the chain is on the cytoplasmic side. A helical membrane pass occupies residues 256–280 (LLKTVVIVLGAFIICWTPGLVLLLL). Over 281 to 294 (DVCCPQCDVLAYEK) the chain is Extracellular. A disulfide bridge links Cys-284 with Cys-287. A helical transmembrane segment spans residues 295 to 315 (FFLLLAEFNSAMNPIIYSYRD). Over 316-393 (KEMSATFRQI…PPERPGQGRV (78 aa)) the chain is Cytoplasmic. Residue Ser-341 is modified to Phosphoserine. Thr-351 is subject to Phosphothreonine. A compositionally biased stretch (basic and acidic residues) spans 369 to 381 (KMRGGHHLLRDEQ). The segment at 369-393 (KMRGGHHLLRDEQPPPPERPGQGRV) is disordered.

It belongs to the G-protein coupled receptor 1 family. Interacts with RALA and GRK2. Interacts with GNAQ and GNA13. Interacts with CD14; the interaction is enhanced by exposure to bacterial lipopolysaccharide (LPS). N-glycosylated. In terms of tissue distribution, detected in brain cortex and in pituitary pars tuberalis.

It localises to the cell surface. Its subcellular location is the cell membrane. It is found in the endosome. Functionally, receptor for lysophosphatidic acid (LPA). Plays a role in the reorganization of the actin cytoskeleton, cell migration, differentiation and proliferation, and thereby contributes to the responses to tissue damage and infectious agents. Activates downstream signaling cascades via the G(i)/G(o), G(12)/G(13), and G(q) families of heteromeric G proteins. Signaling inhibits adenylyl cyclase activity and decreases cellular cAMP levels. Signaling triggers an increase of cytoplasmic Ca(2+) levels. Activates RALA; this leads to the activation of phospholipase C (PLC) and the formation of inositol 1,4,5-trisphosphate. Signaling mediates activation of down-stream MAP kinases. Contributes to the regulation of cell shape. Promotes Rho-dependent reorganization of the actin cytoskeleton in neuronal cells and neurite retraction. Promotes the activation of Rho and the formation of actin stress fibers. Promotes formation of lamellipodia at the leading edge of migrating cells via activation of RAC1. Through its function as LPA receptor, plays a role in chemotaxis and cell migration, including responses to injury and wounding. Plays a role in triggering inflammation in response to bacterial lipopolysaccharide (LPS) via its interaction with CD14. Promotes cell proliferation in response to LPA. Inhibits the intracellular ciliogenesis pathway in response to LPA and through AKT1 activation. Required for normal skeleton development. May play a role in osteoblast differentiation. Required for normal brain development. Required for normal proliferation, survival and maturation of newly formed neurons in the adult dentate gyrus. Plays a role in pain perception and in the initiation of neuropathic pain. The chain is Lysophosphatidic acid receptor 1 (LPAR1) from Ovis aries (Sheep).